The following is a 455-amino-acid chain: Bleomycin hydrolase (455 aa).

M1 carries the N-acetylmethionine modification. Active-site residues include C73 and H372. K391 is modified (N6-acetyllysine). The active site involves N396.

The protein belongs to the peptidase C1 family. In terms of assembly, homohexamer. Interacts with NUDT12 (via ANK repeats).

The protein localises to the cytoplasm. It localises to the cytoplasmic granule. It catalyses the reaction Inactivates bleomycin B2 (a cytotoxic glycometallopeptide) by hydrolysis of a carboxyamide bond of beta-aminoalanine, but also shows general aminopeptidase activity. The specificity varies somewhat with source, but amino acid arylamides of Met, Leu and Ala are preferred.. In terms of biological role, the normal physiological role of BLM hydrolase is unknown, but it catalyzes the inactivation of the antitumor drug BLM (a glycopeptide) by hydrolyzing the carboxamide bond of its B-aminoalaninamide moiety thus protecting normal and malignant cells from BLM toxicity. The polypeptide is Bleomycin hydrolase (Blmh) (Mus musculus (Mouse)).